The sequence spans 305 residues: Protoheme IX farnesyltransferase (305 aa).

9 consecutive transmembrane segments (helical) span residues 38–58 (FITTFTGMWLAFYFTGMSFLG), 60–80 (LDIVLLTMIGSSLIIAGSCAI), 110–130 (AYAFGILLVVLGLIMLLMTTV), 131–151 (TSAVIGFIGVFTYAVLYTMWS), 161–181 (IGSVSGAVPPLIGWTAVTGTI), 185–205 (AWVLFMIMFIWQIPHFLSLAI), 227–247 (VTKRQIIIWTACLLPLPFFLG), 249–269 (LGWPIVALGTLLNIGWLVIGL), and 285–305 (FVYSLNYLTIFFVAMIIITLF).

Belongs to the UbiA prenyltransferase family. Protoheme IX farnesyltransferase subfamily. As to quaternary structure, interacts with CtaA.

It localises to the cell membrane. It carries out the reaction heme b + (2E,6E)-farnesyl diphosphate + H2O = Fe(II)-heme o + diphosphate. Its pathway is porphyrin-containing compound metabolism; heme O biosynthesis; heme O from protoheme: step 1/1. Functionally, converts heme B (protoheme IX) to heme O by substitution of the vinyl group on carbon 2 of heme B porphyrin ring with a hydroxyethyl farnesyl side group. This is Protoheme IX farnesyltransferase from Bacillus pumilus (strain SAFR-032).